The primary structure comprises 561 residues: Inner membrane ABC transporter ATP-binding protein YddA (561 aa).

Residues 1 to 3 (MIT) are Cytoplasmic-facing. A helical membrane pass occupies residues 4–24 (IPITLRMLIAKYLCLLKPFWL). The Periplasmic portion of the chain corresponds to 25 to 31 (RKNNKTS). The chain crosses the membrane as a helical span at residues 32-52 (VLLIIIILAMILGVVKIQVWL). In terms of domain architecture, ABC transmembrane type-1 spans 35-337 (IIIILAMILG…FIYKYDELAE (303 aa)). The Cytoplasmic segment spans residues 53 to 70 (NDWNNDFFNALSQKETDK). The chain crosses the membrane as a helical span at residues 71-91 (LWQLVLWFPALLGIFVLISVN). Over 92-151 (KTWLIKLLTIRWREWLTDYYLNRWFADKNYYFTQIYGEHKNTDNPDQRIAEDILLLISKT) the chain is Periplasmic. The helical transmembrane segment at 152-172 (LSLSFGFIQSLSMLITFTVIL) threads the bilayer. Residues 173–187 (WESAGTLSFTVGGTE) lie on the Cytoplasmic side of the membrane. A helical transmembrane segment spans residues 188 to 208 (WNIQGYMVYTVVLIVIGGTLF). The Periplasmic segment spans residues 209-290 (THKVGKRIRP…WQNIYSRSLS (82 aa)). The helical transmembrane segment at 291-311 (VLPYFLLLPQFISGQINLGGL) threads the bilayer. Residues 312-561 (MKSRQAFMLV…DDICDISAVL (250 aa)) lie on the Cytoplasmic side of the membrane. One can recognise an ABC transporter domain in the interval 367 to 561 (VQVADASIRT…DDICDISAVL (195 aa)). 400 to 407 (GYSGAGKT) contacts ATP.

This sequence belongs to the ABC transporter superfamily.

It is found in the cell inner membrane. This chain is Inner membrane ABC transporter ATP-binding protein YddA (yddA), found in Escherichia coli (strain K12).